Here is a 111-residue protein sequence, read N- to C-terminus: Small ribosomal subunit protein bS6 (111 aa).

This sequence belongs to the bacterial ribosomal protein bS6 family.

Functionally, binds together with bS18 to 16S ribosomal RNA. This chain is Small ribosomal subunit protein bS6, found in Francisella tularensis subsp. tularensis (strain FSC 198).